Here is a 535-residue protein sequence, read N- to C-terminus: MADSKRTGLGEDGAKATYDRLTNDRRAYETRAENCAQYTIPSLFPKESDNESTDYTTPWQAVGARGLNNLASKLMLALFPMQSWMKLTISEYEAKQLVGDPDGLAKVDEGLSMVERIIMNYIESNSYRVTLFECLKQLIVAGNALLYLPEPEGSYNPMKLYRLSSYVVQRDAYGNVLQIVTRDQIAFGALPEDVRSAVEKSGGEKKMDEMVDVYTHVYLDEESGDYLKYEEVEDVEIDGSDATYPTDAMPYIPVRMVRIDGESYGRSYCEEYLGDLRSLENLQEAIVKMSMISAKVIGLVNPAGITQPRRLTKAQTGDFVPGRREDIDFLQLEKQADFTVAKAVSDQIEARLSYAFMLNSAVQRTGERVTAEEIRYVASELEDTLGGVYSILSQELQLPLVRVLLKQLQATSQIPELPKEAVEPTISTGLEAIGRGQDLDKLERCISAWAALAPMQGDPDINLAVIKLRIANAIGIDTSGILLTDEQKQALMMQDAAQTGVENAAAAGGAGVGALATSSPEAMQGAAAKAGLNAT.

This sequence belongs to the podoviridae portal protein family. As to quaternary structure, homododecamer. Interacts with major capsid protein. Interacts with the tail tube proteins gp11 and gp12. Interacts with the terminase large subunit. Interacts with the internal virion protein gp14.

The protein localises to the virion. In terms of biological role, forms the portal vertex of the capsid. This portal plays critical roles in head assembly, genome packaging, neck/tail attachment, and genome ejection. The portal protein multimerizes as a single ring-shaped homododecamer arranged around a central channel. The chain is Portal protein (8) from Enterobacteria phage T3 (Bacteriophage T3).